The primary structure comprises 450 residues: 3-phosphoshikimate 1-carboxyvinyltransferase (450 aa).

Residues methionine 1–arginine 23 form a disordered region. Residues lysine 28, serine 29, and arginine 33 each contribute to the 3-phosphoshikimate site. Lysine 28 contacts phosphoenolpyruvate. Phosphoenolpyruvate is bound by residues glycine 101 and arginine 129. Positions 174, 176, 327, and 354 each coordinate 3-phosphoshikimate. Glutamine 176 serves as a coordination point for phosphoenolpyruvate. Residue aspartate 327 is the Proton acceptor of the active site. 2 residues coordinate phosphoenolpyruvate: arginine 358 and arginine 403.

This sequence belongs to the EPSP synthase family. Monomer.

It localises to the cytoplasm. It carries out the reaction 3-phosphoshikimate + phosphoenolpyruvate = 5-O-(1-carboxyvinyl)-3-phosphoshikimate + phosphate. The protein operates within metabolic intermediate biosynthesis; chorismate biosynthesis; chorismate from D-erythrose 4-phosphate and phosphoenolpyruvate: step 6/7. Its function is as follows. Catalyzes the transfer of the enolpyruvyl moiety of phosphoenolpyruvate (PEP) to the 5-hydroxyl of shikimate-3-phosphate (S3P) to produce enolpyruvyl shikimate-3-phosphate and inorganic phosphate. The chain is 3-phosphoshikimate 1-carboxyvinyltransferase from Roseobacter denitrificans (strain ATCC 33942 / OCh 114) (Erythrobacter sp. (strain OCh 114)).